Here is a 276-residue protein sequence, read N- to C-terminus: MALKHFNPVTASLRGTVLVDRSELWKGKPVKTLTEGKHSTGGRNNHGRITSRFRGGGHKQTYRYVDFKRRKADVPATVERLEYDPNRTAFIALIKYQDGELSYILAPQRLKAGDVVVSGARADIKPGNAMPLGAIPVGTIIHNIEMKPGAGGKIARSAGTYAQLVGKDAGYAQIKLMSGELRVVRAECYATVGAVSNPDNSNIHIGKAGRSRWLGRRPHNRGVVMNPVDHPHGGGEGRTSGGRHPVTPWGKPTKGYKTRTNKRTDSLIIRRRNKGK.

A disordered region spans residues 213-264; the sequence is WLGRRPHNRGVVMNPVDHPHGGGEGRTSGGRHPVTPWGKPTKGYKTRTNKRT.

This sequence belongs to the universal ribosomal protein uL2 family. In terms of assembly, part of the 50S ribosomal subunit. Forms a bridge to the 30S subunit in the 70S ribosome.

Functionally, one of the primary rRNA binding proteins. Required for association of the 30S and 50S subunits to form the 70S ribosome, for tRNA binding and peptide bond formation. It has been suggested to have peptidyltransferase activity; this is somewhat controversial. Makes several contacts with the 16S rRNA in the 70S ribosome. This is Large ribosomal subunit protein uL2 from Granulibacter bethesdensis (strain ATCC BAA-1260 / CGDNIH1).